The sequence spans 91 residues: uncharacterized protein (91 aa).

This is an uncharacterized protein from Rickettsia prowazekii (strain Madrid E).